The sequence spans 232 residues: Lipoprotein-releasing system ATP-binding protein LolD (232 aa).

Positions 6–231 constitute an ABC transporter domain; sequence ISCENLNKVY…KLTIKESQHV (226 aa). 42-49 contacts ATP; the sequence is GSSGSGKS.

This sequence belongs to the ABC transporter superfamily. Lipoprotein translocase (TC 3.A.1.125) family. The complex is composed of two ATP-binding proteins (LolD) and two transmembrane proteins (LolC and LolE).

It localises to the cell inner membrane. In terms of biological role, part of the ABC transporter complex LolCDE involved in the translocation of mature outer membrane-directed lipoproteins, from the inner membrane to the periplasmic chaperone, LolA. Responsible for the formation of the LolA-lipoprotein complex in an ATP-dependent manner. The chain is Lipoprotein-releasing system ATP-binding protein LolD from Pseudoalteromonas translucida (strain TAC 125).